Consider the following 784-residue polypeptide: Cyclin-dependent kinase 11B (784 aa).

Residues 18–60 are compositionally biased toward basic and acidic residues; sequence QEKKRRKEQEEKAEIKRLKNSDDRDSKRDSLEEGELRDHRMEI. Positions 18-401 are disordered; that stretch reads QEKKRRKEQE…EGDYVPDSPA (384 aa). Phosphoserine occurs at positions 47 and 72. The span at 95–113 shows a compositional bias: basic residues; it reads EKAHHRKDEKRKEKRRHRS. Basic and acidic residues-rich tracts occupy residues 114 to 131, 138 to 227, and 238 to 263; these read HSAEGGKHARVKEKEREH, REEQ…DKGK, and PPRERFEMGDNRKPVKEEKVEERDLL. Ser-115 is modified (phosphoserine). Ser-270 carries the post-translational modification Phosphoserine. A compositionally biased stretch (low complexity) spans 278–289; sequence SAESSSAESGSG. Acidic residues-rich tracts occupy residues 290 to 353 and 372 to 381; these read SEEE…EDRE and DSEEGEEEVG. Residues 427–712 form the Protein kinase domain; sequence FQCLNRIEEG…AEDGLKHEYF (286 aa). Residues 433 to 441 and Lys-456 each bind ATP; that span reads IEEGTYGVV. Ser-471 is subject to Phosphoserine; by CDK7. Position 477 is a phosphothreonine; by CDK7 (Thr-477). Asp-551 acts as the Proton acceptor in catalysis. Ser-578 is subject to Phosphoserine. Position 583 is a phosphotyrosine (Tyr-583). A Phosphothreonine modification is found at Thr-584. Lys-630 is covalently cross-linked (Glycyl lysine isopeptide (Lys-Gly) (interchain with G-Cter in SUMO2)). Positions 722 to 784 are disordered; sequence SMFPTWPAKS…AAGPGFSLKF (63 aa). At Thr-740 the chain carries Phosphothreonine. Ser-741 is modified (phosphoserine).

It belongs to the protein kinase superfamily. CMGC Ser/Thr protein kinase family. CDC2/CDKX subfamily. May interact PAK1 and RANBP9. p110C interacts with RNPS1. Interacts with CCND3. Interacts with CCNL1 and CCNL2. Forms complexes with pre-mRNA-splicing factors, including at least SRSF1, SRSF2 AND SRSF7/SLU7. Mg(2+) is required as a cofactor. In terms of processing, phosphorylation at Ser-115 creates a binding site for 14-3-3 proteins.

It catalyses the reaction L-seryl-[protein] + ATP = O-phospho-L-seryl-[protein] + ADP + H(+). The catalysed reaction is L-threonyl-[protein] + ATP = O-phospho-L-threonyl-[protein] + ADP + H(+). Its activity is regulated as follows. Phosphorylation at Thr-437 or Tyr-438 inactivates the enzyme, while phosphorylation at Thr-584 activates it. Plays multiple roles in cell cycle progression, cytokinesis and apoptosis. Involved in pre-mRNA splicing in a kinase activity-dependent manner. May act as a negative regulator of normal cell cycle progression. This chain is Cyclin-dependent kinase 11B (Cdk11b), found in Mus musculus (Mouse).